We begin with the raw amino-acid sequence, 279 residues long: 2-dehydro-3-deoxyphosphooctonate aldolase (279 aa).

Belongs to the KdsA family.

Its subcellular location is the cytoplasm. It catalyses the reaction D-arabinose 5-phosphate + phosphoenolpyruvate + H2O = 3-deoxy-alpha-D-manno-2-octulosonate-8-phosphate + phosphate. Its pathway is carbohydrate biosynthesis; 3-deoxy-D-manno-octulosonate biosynthesis; 3-deoxy-D-manno-octulosonate from D-ribulose 5-phosphate: step 2/3. It participates in bacterial outer membrane biogenesis; lipopolysaccharide biosynthesis. The polypeptide is 2-dehydro-3-deoxyphosphooctonate aldolase (Azoarcus sp. (strain BH72)).